Consider the following 370-residue polypeptide: MAKVSLEKLLRIPPSLTQSISQTKVDYLNLGHSGLRVSRPILGGLHLGSRKWLPWVLDEEKALPILKAAYDLGVNTWDTANVYSNGESERIIAKALSKYKIPRNKVVLMTKCYRVMSDPERFDPGSGVTMHHELADYSKDYVNQWGLSRRALFSAVEASLDRLNTSYIDVLQIHRFDHTVPPEETMSALNDLIRAGMVRYIGASSMWTFQFATLQHIAETKGLTKFISMQNHYNLIYREEEREMNQYCKMTGVGLIPWGPLASGRLARRPTQEEGSLRASCSAHGSLYESDDYNVDRIIQRVAEIAEKRGWPMSHVSLAWLNRRVTAPIIGFGSVGRIEEALAARGKELSRDEEQYLEELYVPQRIQGHS.

Residue D78 participates in NADP(+) binding. The active-site Proton donor is Y83. H174 is a binding site for substrate. NADP(+) contacts are provided by residues 204 to 205 (SS), Q230, 259 to 269 (GPLASGRLARR), and 333 to 341 (GSVGRIEEA).

The protein belongs to the aldo/keto reductase family.

Its pathway is secondary metabolite biosynthesis. Its function is as follows. Aldo-keto reductase; part of the gene cluster that mediates the biosynthesis of destruxins, insecticidal cyclic hexadepsipeptides which induce flaccid paralysis and visceral muscle contraction in insects through targeting the calcium channels and vacuolar-type ATPases. The aldo-keto reductase dtxS3 converts alpha-ketoisocaproic acid from deaminated leucine into alpha-hydroxyisocaproic acid (HIC), which is the first substrate for destruxin assembly by dtxS1. L-aspartate decarboxylase dtxS4 converts aspartic acid into beta-alanine, the last substrate for the destruxin assembly line performed by dtxS1. The nonribosomal peptide synthetase dtxS1 synthesizes destruxins B and B2, whereas the cytochrome P450 monooxygenase dtxS2 is required to convert destruxin B into other destruxin derivatives, including destructins C, D, A and E. Destruxin E-diol (ED) is further produced in a non-enzymatic manner from destruxin E. Destruxins play an important role in virulence and escape from insect host immune defenses. This is Aldo-keto reductase dtxS3 from Metarhizium robertsii (strain ARSEF 23 / ATCC MYA-3075) (Metarhizium anisopliae (strain ARSEF 23)).